The sequence spans 74 residues: MKVKFLLAVFLIVLVVTDHCHALFGLIPSLIGGLVSAFKGRRKRQMEARFEPQNRNYRKRELDLEKLFANMPDY.

A signal peptide spans 1-22; the sequence is MKVKFLLAVFLIVLVVTDHCHA. K39 is modified (lysine amide). Positions 45 to 74 are excised as a propeptide; sequence QMEARFEPQNRNYRKRELDLEKLFANMPDY.

Belongs to the non-disulfide-bridged peptide (NDBP) superfamily. Short antimicrobial peptide (group 4) family. As to expression, expressed by the venom gland.

It localises to the secreted. The protein resides in the target cell membrane. Its function is as follows. Mucroporin: cationic host defense peptide that have antibacterial activity by breaking membranes. Is more effective on Gram-positive than on Gram-negative bacteria. Minimum inhibitory concentrations (MIC) are the following: MIC=&gt;100 ug/ml against E.coli AB94012, MIC=&gt;100 ug/ml against P.aeruginosa AB93066, MIC=25 ug/ml against B.thuringiensis AB92037, MIC=50 ug/ml against B.subtilis AB91021, MIC=25 ug/ml against S.aureus AB94004, and MIC=25 ug/ml against the methicillin-resistant coagulase-negative Staphylococcus. Its synthetic analog mucroporin-M1 is more effective. Does not show antiviral activity against any of measles, SARS-CoV, influenza H5N1, hepatitis B and HIV-1 viruses. In terms of biological role, mutant mucroporin-M1: can inhibit Gram-positive bacteria at low concentrations and antibiotic-resistant pathogens. Minimum inhibitory concentrations (MIC) are the following: MIC=12.5 ug/ml against E.coli AB94012, MIC=100 ug/ml against P.aeruginosa AB93066, MIC=25 ug/ml against B.thuringiensis AB92037, MIC=25 ug/ml against B.subtilis AB91021, MIC=5 ug/ml against S.aureus AB94004, and MIC=5 ug/ml against the methicillin-resistant coagulase-negative Staphylococcus. Also shows antiviral activities against measles (EC(50) of 7.15 ug/ml), SARS-CoV (EC(50) of 14.46 ug/ml), influenza H5N1 viruses (EC(50) of 2.10 mug/ml), HIV-1, and hepatitis B virus. The protein is Mucroporin of Lychas mucronatus (Chinese swimming scorpion).